Consider the following 2515-residue polypeptide: Protein tudor (2515 aa).

Serine 226, serine 235, and serine 239 each carry phosphoserine. Tudor domains follow at residues 455–513 (APEL…LLEI) and 641–696 (QLIL…HLEM). The residue at position 800 (serine 800) is a Phosphoserine. A disordered region spans residues 840–996 (QAVKSVSGSK…SSSESVAAAK (157 aa)). Positions 890–900 (STGSYSSGMSS) are enriched in low complexity. Polar residues predominate over residues 906-917 (RQQNGRTPIQSP). Positions 918 to 927 (RHNEKQEAKK) are enriched in basic and acidic residues. 2 stretches are compositionally biased toward polar residues: residues 943-954 (GQQGNQRSQNAP) and 964-976 (QKST…SSKR). The span at 977 to 995 (SSGVGSDIASSSSESVAAA) shows a compositional bias: low complexity. Tudor domains are found at residues 1062–1122 (QLKV…FADP) and 1355–1414 (KFDV…FYEH). A disordered region spans residues 1515-1589 (EEDKGRKETV…KPATPVPEVV (75 aa)). The span at 1540 to 1553 (NDKDREPKKSKPAE) shows a compositional bias: basic and acidic residues. Pro residues predominate over residues 1569–1584 (SPVPAEPAPVPKPATP). Tudor domains lie at 1662-1718 (NVVN…SHIE), 1839-1898 (GFEK…SLPS), 2023-2082 (KAAV…LIKP), 2211-2269 (TTNS…PIPS), and 2392-2451 (DLKE…KPAR).

In terms of assembly, may form part of a piRNA processing complex consisting of tud, aub and AGO3. Interacts with AGO3 (when symmetrically dimethylated on Arg residues) and aub (when symmetrically dimethylated on Arg residues). Interacts with vls. Interacts with me31B/DDX6 (when symmetrically dimethylated on Arg residues).

The protein resides in the cytoplasm. The protein localises to the perinuclear region. It is found in the cytoplasmic ribonucleoprotein granule. Functionally, may act via the Piwi-interacting RNA (piRNA) metabolic process mediated by aub and AGO3 Piwi proteins, which mediates the repression of transposable elements during meiosis by forming complexes composed of piRNAs and Piwi proteins and governs the methylation and subsequent repression of transposons. Required during oogenesis for the formation of primordial germ cells and for normal abdominal segmentation. Not involved in repression of retroelements. The sequence is that of Protein tudor from Drosophila melanogaster (Fruit fly).